Reading from the N-terminus, the 610-residue chain is ABC transporter ATP-binding protein ARB1 (610 aa).

The disordered stretch occupies residues 1-43 (MPPVSASKAKRDAKKAEREAKKAAAGKTIRKLGRKKEAAAEES). Phosphoserine occurs at positions 43 and 65. 2 consecutive ABC transporter domains span residues 82–323 (IKLS…TNQM) and 393–610 (LAFD…NVVL). Residue 114–121 (GENGCGKS) coordinates ATP. Serine 196 bears the Phosphoserine mark. Residue 428–435 (GPNGVGKS) participates in ATP binding. Threonine 446 bears the Phosphothreonine mark.

The protein belongs to the ABC transporter superfamily. ABCF family. EF3 subfamily. As to quaternary structure, interacts with LSG1.

The protein localises to the cytoplasm. It localises to the nucleus. The enzyme catalyses ATP + H2O = ADP + phosphate + H(+). In terms of biological role, ATPase that stimulates 40S and 60S ribosome biogenesis. Also involved in ribosome-associated quality control (RQC) pathway, a pathway that mediates ubiquitination and extraction of incompletely synthesized nascent chains for proteasomal degradation: localizes to the ribosomal E-site and stimulates VMS1-dependent tRNA cleavage. The sequence is that of ABC transporter ATP-binding protein ARB1 (ARB1) from Saccharomyces cerevisiae (strain ATCC 204508 / S288c) (Baker's yeast).